The chain runs to 490 residues: Thyroid hormone receptor alpha (490 aa).

The disordered stretch occupies residues 1–32 (MEQKPSKVECGSDPEENSARSPDGKRKRKNGQ). Residues 1–52 (MEQKPSKVECGSDPEENSARSPDGKRKRKNGQCSLKTSMSGYIPSYLDKDEQ) form a modulating region. 8 residues coordinate Zn(2+): Cys53, Cys56, Cys70, Cys73, Cys91, Cys97, Cys107, and Cys110. NR C4-type zinc fingers lie at residues 53 to 73 (CVVC…CEGC) and 91 to 115 (CKYD…FKKC). Residues 53-127 (CVVCGDKATG…VGMAMDLVLD (75 aa)) constitute a DNA-binding region (nuclear receptor). Residues 163 to 407 (EEWDLIHIAT…EGQQLLGMHV (245 aa)) form the NR LBD domain. 3,3',5-triiodo-L-thyronine-binding residues include Arg228 and Ser277. Residues 457–490 (AVCGEDDSSEADSPSSSEEEPEVCEDLAGNAASP) form a disordered region.

It belongs to the nuclear hormone receptor family. NR1 subfamily. As to quaternary structure, binds DNA as a dimer; homodimer and heterodimer with RXRB. Interacts with NCOA3 and NCOA6 coactivators, leading to a strong increase of transcription of target genes. Probably interacts with SFPQ. Interacts with C1D. Interacts with AKAP13. Interacts with TP53INP2. Interacts with PER2. Isoform alpha-2 and isoform alpha-1 interact with TACC1, but the interaction with alpha-1 is weaker. The interaction with isoform alpha-1, but not alpha-2, is decreased in the presence of thyroid hormone T3.

It localises to the nucleus. It is found in the cytoplasm. Nuclear hormone receptor that can act as a repressor or activator of transcription. High affinity receptor for thyroid hormones, including triiodothyronine and thyroxine. Its function is as follows. Does not bind thyroid hormone and functions as a weak dominant negative inhibitor of thyroid hormone action. The protein is Thyroid hormone receptor alpha (THRA) of Homo sapiens (Human).